We begin with the raw amino-acid sequence, 279 residues long: MNQSHKPPSIVVGIDGSKPAVQAALWAVDEAASRDIPLRLLYAIEPDDPGYAAHGAAARKLAAAENAVRYAFTAVEAADRPVKVEVEITQERPVTSLIRASAAAALVCVGAIGVHHFRPERVGSTAAALALSAQCPVAIVRPHRVPIGRDAAWIVVEADGSSDIGVLLGAVMAEARLRDSPVRVVTCRQSGVGDTGDDVRASLDRWLARWQPRYPDVRVQSAAVHGELLDYLAGLGRSVHMVVLSASDQEHVEQLVGAPGNAVLQEAGCTLLVVGQQYL.

It belongs to the universal stress protein A family.

The protein is Universal stress protein MT2087 of Mycobacterium tuberculosis (strain CDC 1551 / Oshkosh).